Here is a 530-residue protein sequence, read N- to C-terminus: UDP-glucuronosyltransferase 2B17 (530 aa).

A signal peptide spans 1 to 23 (MPGKWISALLLLQISCCFRSVKC). Asn-316 and Asn-483 each carry an N-linked (GlcNAc...) asparagine glycan. The helical transmembrane segment at 494-510 (VIGFLLSCVATTIVLSV) threads the bilayer.

It belongs to the UDP-glycosyltransferase family.

It is found in the endoplasmic reticulum membrane. The enzyme catalyses glucuronate acceptor + UDP-alpha-D-glucuronate = acceptor beta-D-glucuronoside + UDP + H(+). It carries out the reaction 17alpha-estradiol + UDP-alpha-D-glucuronate = 17alpha-estradiol 3-O-(beta-D-glucuronate) + UDP + H(+). The catalysed reaction is 17alpha-estradiol + UDP-alpha-D-glucuronate = 17alpha-estradiol 17-O-(beta-D-glucuronate) + UDP + H(+). It catalyses the reaction 17beta-estradiol + UDP-alpha-D-glucuronate = 17beta-estradiol 17-O-(beta-D-glucuronate) + UDP + H(+). The enzyme catalyses 17beta-hydroxy-5alpha-androstan-3-one + UDP-alpha-D-glucuronate = 5alpha-dihydrotestosterone 17-O-(beta-D-glucuronate) + UDP + H(+). It carries out the reaction testosterone + UDP-alpha-D-glucuronate = testosterone 17-O-(beta-D-glucuronate) + UDP + H(+). UDP-glucuronosyltransferase (UGT) that catalyzes phase II biotransformation reactions in which lipophilic substrates are conjugated with glucuronic acid to increase the metabolite's water solubility, thereby facilitating excretion into either the urine or bile. Catalyzes the glucuronidation of endogenous steroid hormones such as androgens (epitestosterone, androsterone) and estrogens (estradiol, epiestradiol). The chain is UDP-glucuronosyltransferase 2B17 from Mus musculus (Mouse).